The sequence spans 574 residues: Choline transporter-like protein ctl1 (574 aa).

Residues Asn-40 and Asn-101 are each glycosylated (N-linked (GlcNAc...) asparagine). The next 8 membrane-spanning stretches (helical) occupy residues 144-164 (WGLT…LMVW), 189-209 (KDAI…VAIP), 211-231 (FLYF…VYLL), 246-266 (LMLL…YYVW), 291-311 (QITL…FIWV), 336-356 (WVLA…FHAL), 396-416 (YGLC…LHFL), and 434-456 (TSAS…VPYM). The N-linked (GlcNAc...) asparagine glycan is linked to Asn-457. 2 consecutive transmembrane segments (helical) span residues 485–505 (LLAA…NYSI) and 511–531 (FYGY…IGAI). Asn-558 carries N-linked (GlcNAc...) asparagine glycosylation.

The protein belongs to the CTL (choline transporter-like) family. As to quaternary structure, interacts with atg9.

It localises to the endoplasmic reticulum membrane. The protein localises to the preautophagosomal structure membrane. Required for the normal organization of the preautophagosomal structure (PAS) and for the correct subcellular location of atg9. This Schizosaccharomyces pombe (strain 972 / ATCC 24843) (Fission yeast) protein is Choline transporter-like protein ctl1 (ctl1).